A 364-amino-acid polypeptide reads, in one-letter code: Probable dual-specificity RNA methyltransferase RlmN (364 aa).

The active-site Proton acceptor is the E106. A Radical SAM core domain is found at 112 to 350; the sequence is YPQRNTVCIS…SCTVRDTRGR (239 aa). The cysteines at positions 119 and 356 are disulfide-linked. Positions 126, 130, and 133 each coordinate [4Fe-4S] cluster. S-adenosyl-L-methionine-binding positions include 177–178, S211, 234–236, and N313; these read GE and SLH. Catalysis depends on C356, which acts as the S-methylcysteine intermediate.

Belongs to the radical SAM superfamily. RlmN family. The cofactor is [4Fe-4S] cluster.

It is found in the cytoplasm. The catalysed reaction is adenosine(2503) in 23S rRNA + 2 reduced [2Fe-2S]-[ferredoxin] + 2 S-adenosyl-L-methionine = 2-methyladenosine(2503) in 23S rRNA + 5'-deoxyadenosine + L-methionine + 2 oxidized [2Fe-2S]-[ferredoxin] + S-adenosyl-L-homocysteine. It catalyses the reaction adenosine(37) in tRNA + 2 reduced [2Fe-2S]-[ferredoxin] + 2 S-adenosyl-L-methionine = 2-methyladenosine(37) in tRNA + 5'-deoxyadenosine + L-methionine + 2 oxidized [2Fe-2S]-[ferredoxin] + S-adenosyl-L-homocysteine. In terms of biological role, specifically methylates position 2 of adenine 2503 in 23S rRNA and position 2 of adenine 37 in tRNAs. This Mycobacterium ulcerans (strain Agy99) protein is Probable dual-specificity RNA methyltransferase RlmN.